Here is a 493-residue protein sequence, read N- to C-terminus: Cytoplasmic tRNA 2-thiolation protein 2 (493 aa).

Serine 489 carries the post-translational modification Phosphoserine.

Belongs to the CTU2/NCS2 family. In terms of assembly, interacts with NCS6 and URM1. May act by forming a heterodimer with NCS6.

It localises to the cytoplasm. Its pathway is tRNA modification; 5-methoxycarbonylmethyl-2-thiouridine-tRNA biosynthesis. Its function is as follows. Plays a central role in 2-thiolation of mcm(5)S(2)U at tRNA wobble positions of tRNA(Lys), tRNA(Glu) and tRNA(Gln). May act by forming a heterodimer with NCS6 that ligates sulfur from thiocarboxylated URM1 onto the uridine of tRNAs at wobble position. Prior mcm(5) tRNA modification by the elongator complex is required for 2-thiolation. May also be involved in protein urmylation and in invasive and pseudohyphal growth. Inhibits replication of Brome mosaic virus. The polypeptide is Cytoplasmic tRNA 2-thiolation protein 2 (Saccharomyces cerevisiae (strain ATCC 204508 / S288c) (Baker's yeast)).